A 65-amino-acid chain; its full sequence is UPF0434 protein Mpe_A2486 (65 aa).

This sequence belongs to the UPF0434 family.

The protein is UPF0434 protein Mpe_A2486 of Methylibium petroleiphilum (strain ATCC BAA-1232 / LMG 22953 / PM1).